Here is a 413-residue protein sequence, read N- to C-terminus: uncharacterized protein (413 aa).

The first 22 residues, 1–22 (MKKSKASALLWLFSLVGFMLHA), serve as a signal peptide directing secretion.

The protein resides in the periplasm. Its function is as follows. May be involved in ulvan degradation. Ulvan is the main polysaccharide component of the Ulvales (green seaweed) cell wall. It is composed of disaccharide building blocks comprising 3-sulfated rhamnose (Rha3S) linked to D-glucuronic acid (GlcA), L-iduronic acid (IduA), or D-xylose (Xyl). This is an uncharacterized protein from Formosa agariphila (strain DSM 15362 / KCTC 12365 / LMG 23005 / KMM 3901 / M-2Alg 35-1).